A 341-amino-acid polypeptide reads, in one-letter code: Guanine nucleotide-binding protein subunit beta (341 aa).

WD repeat units lie at residues 54-84, 96-126, 142-171, 183-213, 225-255, 269-299, and 311-341; these read GHLA…IVWD, LRSS…SIYS, GHTG…ALWN, GHTG…KLFD, GHES…RLFD, NIIC…NVWD, and GHDN…KIWN.

It belongs to the WD repeat G protein beta family. G proteins are composed of 3 units, alpha, beta and gamma.

Guanine nucleotide-binding proteins (G proteins) are involved as a modulator or transducer in various transmembrane signaling systems. The beta and gamma chains are required for the GTPase activity, for replacement of GDP by GTP, and for G protein-effector interaction. This is Guanine nucleotide-binding protein subunit beta from Loligo forbesii (Veined squid).